The following is a 309-amino-acid chain: Aspartate carbamoyltransferase catalytic subunit (309 aa).

Residues Arg-56 and Thr-57 each coordinate carbamoyl phosphate. Lys-84 is a binding site for L-aspartate. Positions 106, 136, and 139 each coordinate carbamoyl phosphate. L-aspartate-binding residues include Arg-169 and Arg-221. Carbamoyl phosphate is bound by residues Ala-264 and Pro-265.

Belongs to the aspartate/ornithine carbamoyltransferase superfamily. ATCase family. In terms of assembly, heterododecamer (2C3:3R2) of six catalytic PyrB chains organized as two trimers (C3), and six regulatory PyrI chains organized as three dimers (R2).

It catalyses the reaction carbamoyl phosphate + L-aspartate = N-carbamoyl-L-aspartate + phosphate + H(+). It participates in pyrimidine metabolism; UMP biosynthesis via de novo pathway; (S)-dihydroorotate from bicarbonate: step 2/3. Catalyzes the condensation of carbamoyl phosphate and aspartate to form carbamoyl aspartate and inorganic phosphate, the committed step in the de novo pyrimidine nucleotide biosynthesis pathway. The protein is Aspartate carbamoyltransferase catalytic subunit of Limosilactobacillus reuteri subsp. reuteri (strain JCM 1112) (Lactobacillus reuteri).